We begin with the raw amino-acid sequence, 726 residues long: NHL repeat-containing protein 2 (726 aa).

Positions 43–200 (QKVDGWEQDL…TSIALKYYKD (158 aa)) constitute a Thioredoxin domain. 6 NHL repeats span residues 212-254 (KLYK…VWKN), 265-307 (NPGR…IDLE), 335-369 (ISSP…IWAL), 409-439 (FAQP…VRTV), 461-505 (AFGD…VDPK), and 518-562 (TNNV…MDLE).

Monomer. As to expression, ubiquitous. Detected in heart, kidney, muscle, brain, lung, liver and in skin fibroblasts (at protein level).

The protein resides in the cytoplasm. The protein localises to the cytosol. In terms of biological role, required for normal embryonic development. The chain is NHL repeat-containing protein 2 (NHLRC2) from Homo sapiens (Human).